The sequence spans 335 residues: ATP-dependent 6-phosphofructokinase (335 aa).

Glycine 11 contributes to the ATP binding site. ADP is bound at residue 21–25 (RAVVR). ATP-binding positions include 72 to 73 (RY) and 102 to 105 (GDGS). Residue aspartate 103 coordinates Mg(2+). Residue 125–127 (TID) participates in substrate binding. Residue aspartate 127 is the Proton acceptor of the active site. An ADP-binding site is contributed by arginine 154. Residues arginine 162 and 169–171 (MGR) each bind substrate. Residues 185–187 (GAD) and 213–215 (KKH) each bind ADP. Residues glutamate 222, arginine 244, and 250 to 253 (HIQR) each bind substrate.

This sequence belongs to the phosphofructokinase type A (PFKA) family. ATP-dependent PFK group I subfamily. Prokaryotic clade 'B1' sub-subfamily. In terms of assembly, homotetramer. Mg(2+) is required as a cofactor.

It is found in the cytoplasm. It carries out the reaction beta-D-fructose 6-phosphate + ATP = beta-D-fructose 1,6-bisphosphate + ADP + H(+). The protein operates within carbohydrate degradation; glycolysis; D-glyceraldehyde 3-phosphate and glycerone phosphate from D-glucose: step 3/4. Allosterically activated by ADP and other diphosphonucleosides, and allosterically inhibited by phosphoenolpyruvate. Catalyzes the phosphorylation of D-fructose 6-phosphate to fructose 1,6-bisphosphate by ATP, the first committing step of glycolysis. The chain is ATP-dependent 6-phosphofructokinase from Streptococcus pneumoniae (strain CGSP14).